The sequence spans 204 residues: Large ribosomal subunit protein eL15 (204 aa).

This sequence belongs to the eukaryotic ribosomal protein eL15 family. As to quaternary structure, component of the large ribosomal subunit.

Its subcellular location is the cytoplasm. Its function is as follows. Component of the large ribosomal subunit. The ribosome is a large ribonucleoprotein complex responsible for the synthesis of proteins in the cell. The protein is Large ribosomal subunit protein eL15 (rpl15) of Silurus asotus (Amur catfish).